Here is a 286-residue protein sequence, read N- to C-terminus: Prepilin leader peptidase/N-methyltransferase (286 aa).

The chain crosses the membrane as a helical span at residues Leu-11–Ile-31. The Zn(2+) site is built by Cys-74, Cys-77, Cys-99, and Cys-102. 6 helical membrane passes run Ile-106 to Phe-126, Leu-132 to Ala-152, Leu-161 to Leu-181, Val-185 to Ile-205, Leu-231 to Leu-251, and Met-257 to Ile-277.

The protein belongs to the peptidase A24 family. Zn(2+) is required as a cofactor.

It localises to the cell inner membrane. It catalyses the reaction Typically cleaves a -Gly-|-Phe- bond to release an N-terminal, basic peptide of 5-8 residues from type IV prepilin, and then N-methylates the new N-terminal amino group, the methyl donor being S-adenosyl-L-methionine.. Plays an essential role in type IV pili and type II pseudopili formation by proteolytically removing the leader sequence from substrate proteins and subsequently monomethylating the alpha-amino group of the newly exposed N-terminal phenylalanine. The polypeptide is Prepilin leader peptidase/N-methyltransferase (fimP) (Dichelobacter nodosus (Bacteroides nodosus)).